Here is a 317-residue protein sequence, read N- to C-terminus: DNA repair nuclease/redox regulator APEX1 (317 aa).

Positions 1–58 are disordered; the sequence is MPKRGKKAAADDGEEPKSEPETKKSKGAAKKTEKEAAGEGPVLYEDPPDQKTSPSGKS. The segment at 2–32 is necessary for interaction with YBX1, binding to RNA, association together with NPM1 to rRNA, endoribonuclease activity on abasic RNA and localization in the nucleoli; that stretch reads PKRGKKAAADDGEEPKSEPETKKSKGAAKKT. N6-acetyllysine; by EP300 is present on residues Lys-6 and Lys-7. The Nuclear localization signal (NLS) signature appears at 8 to 12; it reads AAADD. Residues 15-37 are compositionally biased toward basic and acidic residues; that stretch reads EPKSEPETKKSKGAAKKTEKEAA. Residue Ser-18 is modified to Phosphoserine. The tract at residues 22-32 is necessary for interaction with NPM1 and for efficient rRNA binding; it reads TKKSKGAAKKT. Residues Lys-26, Lys-30, Lys-31, and Lys-34 each carry the N6-acetyllysine modification. Ser-53 bears the Phosphoserine mark. Residues 63-79 carry the Nuclear export signal (NES) motif; the sequence is ICSWNVDGLRAWIKKKG. Cys-64 is subject to S-nitrosocysteine; alternate. Residues Cys-64 and Cys-92 are joined by a disulfide bond. Asp-69 contacts Mg(2+). Residue Cys-92 is modified to S-nitrosocysteine; alternate. Glu-95 serves as a coordination point for Mg(2+). The active site involves Tyr-170. An N6-acetyllysine modification is found at Lys-196. Positions 209 and 211 each coordinate Mg(2+). The Proton donor/acceptor role is filled by Asp-209. At Thr-232 the chain carries Phosphothreonine; by CDK5. Residues 288–317 form a mitochondrial targeting sequence (MTS) region; sequence HSLLPALCDSKIRSKALGSDHCPITLYLAL. Asp-307 lines the Mg(2+) pocket. Cys-309 is subject to S-nitrosocysteine.

Belongs to the DNA repair enzymes AP/ExoA family. In terms of assembly, monomer. Homodimer; disulfide-linked. Component of the SET complex, composed of at least APEX1, SET, ANP32A, HMGB2, NME1 and TREX1. Associates with the dimer XRCC5/XRCC6 in a DNA-dependent manner. Interacts with SIRT1; the interaction is increased in the context of genotoxic stress. Interacts with HDAC1, HDAC2 and HDAC3; the interactions are not dependent on the APEX1 acetylation status. Interacts with XRCC1; the interaction is induced by SIRT1 and increased with the APEX1 acetylated form. Interacts with NPM1 (via N-terminal domain); the interaction is RNA-dependent and decreases in hydrogen peroxide-damaged cells. Interacts (via N-terminus) with YBX1 (via C-terminus); the interaction is increased in presence of APEX1 acetylated at Lys-6 and Lys-7. Interacts with HNRNPL; the interaction is DNA-dependent. Interacts (via N-terminus) with KPNA1 and KPNA2. Interacts with TXN; the interaction stimulates the FOS/JUN AP-1 complex DNA-binding activity in a redox-dependent manner. Interacts with GZMA, KRT8, MDM2, POLB, PRDX6, PRPF19, RPLP0, TOMM20 and WDR77. Binds to CDK5. The cofactor is Mg(2+). Requires Mn(2+) as cofactor. Phosphorylated. Phosphorylation by kinase PKC or casein kinase CK2 results in enhanced redox activity that stimulates binding of the FOS/JUN AP-1 complex to its cognate binding site. AP-endodeoxyribonuclease activity is not affected by CK2-mediated phosphorylation. Phosphorylation of Thr-232 by CDK5 in response to MPP(+)/MPTP (1-methyl-4-phenylpyridinium) reduces AP-endodeoxyribonuclease activity resulting in accumulation of DNA damage and contributing to neuronal death. Post-translationally, acetylated on Lys-6 and Lys-7. Acetylation is increased by the transcriptional coactivator EP300 acetyltransferase, genotoxic agents like H(2)O(2) and methyl methanesulfonate (MMS). Acetylation increases its binding affinity to the negative calcium response element (nCaRE) DNA promoter. The acetylated form induces a stronger binding of YBX1 to the Y-box sequence in the MDR1 promoter than the unacetylated form. Deacetylated on lysines. Lys-6 and Lys-7 are deacetylated by SIRT1. In terms of processing, cleaved at Lys-30 by granzyme A to create the mitochondrial form; leading in reduction of binding to DNA, AP endodeoxyribonuclease activity, redox activation of transcription factors and to enhanced cell death. Cleaved by granzyme K; leading to intracellular ROS accumulation and enhanced cell death after oxidative stress. Cys-64 and Cys-92 are nitrosylated in response to nitric oxide (NO) and lead to the exposure of the nuclear export signal (NES). Post-translationally, ubiquitinated by MDM2; leading to translocation to the cytoplasm and proteasomal degradation. Expressed in both resting and stimulated B cells stimulated to switch (at protein level).

Its subcellular location is the nucleus. The protein localises to the nucleolus. It is found in the nucleus speckle. It localises to the endoplasmic reticulum. The protein resides in the cytoplasm. Its subcellular location is the mitochondrion. The catalysed reaction is a deoxyribonucleotide-2'-deoxyribose-5'-monophosphate-DNA + H2O = a 5'-end 2'-deoxyribose-5'-monophosphate-DNA + a 3'-end 2'-deoxyribonucleotide-DNA + H(+). The enzyme catalyses Exonucleolytic cleavage in the 3'- to 5'-direction to yield nucleoside 5'-phosphates.. It carries out the reaction a 3'-end 2'-deoxyribonucleotide-3'-phosphoglycolate-DNA + H2O = 2-phosphoglycolate + a 3'-end 2'-deoxyribonucleotide-DNA + H(+). It catalyses the reaction a 3'-end 2'-deoxyribonucleotide-8-oxoguanine-DNA + H2O = 8-oxo-dGMP + a 3'-end 2'-deoxyribonucleotide-DNA + H(+). With respect to regulation, NPM1 stimulates endodeoxyribonuclease activity on double-stranded DNA with AP sites, but inhibits endoribonuclease activity on single-stranded RNA containing AP sites. Its function is as follows. Multifunctional protein that plays a central role in the cellular response to oxidative stress. The two major activities of APEX1 are DNA repair and redox regulation of transcriptional factors. Functions as an apurinic/apyrimidinic (AP) endodeoxyribonuclease in the base excision repair (BER) pathway of DNA lesions induced by oxidative and alkylating agents. Initiates repair of AP sites in DNA by catalyzing hydrolytic incision of the phosphodiester backbone immediately adjacent to the damage, generating a single-strand break with 5'-deoxyribose phosphate and 3'-hydroxyl ends. Also incises at AP sites in the DNA strand of DNA/RNA hybrids, single-stranded DNA regions of R-loop structures, and single-stranded RNA molecules. Operates at switch sites of immunoglobulin (Ig) constant regions where it mediates Ig isotype class switch recombination. Processes AP sites induced by successive action of AICDA and UNG. Generates staggered nicks in opposite DNA strands resulting in the formation of double-strand DNA breaks that are finally resolved via non-homologous end joining repair pathway. Has 3'-5' exodeoxyribonuclease activity on mismatched deoxyribonucleotides at the 3' termini of nicked or gapped DNA molecules during short-patch BER. Possesses DNA 3' phosphodiesterase activity capable of removing lesions (such as phosphoglycolate and 8-oxoguanine) blocking the 3' side of DNA strand breaks. Also acts as an endoribonuclease involved in the control of single-stranded RNA metabolism. Plays a role in regulating MYC mRNA turnover by preferentially cleaving in between UA and CA dinucleotides of the MYC coding region determinant (CRD). In association with NMD1, plays a role in the rRNA quality control process during cell cycle progression. Acts as a loading factor for POLB onto non-incised AP sites in DNA and stimulates the 5'-terminal deoxyribose 5'-phosphate (dRp) excision activity of POLB. Exerts reversible nuclear redox activity to regulate DNA binding affinity and transcriptional activity of transcriptional factors by controlling the redox status of their DNA-binding domain, such as the FOS/JUN AP-1 complex after exposure to IR. Involved in calcium-dependent down-regulation of parathyroid hormone (PTH) expression by binding to negative calcium response elements (nCaREs). Together with HNRNPL or the dimer XRCC5/XRCC6, associates with nCaRE, acting as an activator of transcriptional repression. May also play a role in the epigenetic regulation of gene expression by participating in DNA demethylation. Stimulates the YBX1-mediated MDR1 promoter activity, when acetylated at Lys-6 and Lys-7, leading to drug resistance. Plays a role in protection from granzyme-mediated cellular repair leading to cell death. Binds DNA and RNA. Associates, together with YBX1, on the MDR1 promoter. Together with NPM1, associates with rRNA. The sequence is that of DNA repair nuclease/redox regulator APEX1 (Apex1) from Mus musculus (Mouse).